A 431-amino-acid polypeptide reads, in one-letter code: Divergent protein kinase domain 1B (431 aa).

The Cytoplasmic portion of the chain corresponds to 1–30 (MRRLRRLVHLVLLCPFSKGLQGRLPGLRVK). The short motif at 5-6 (RR) is the May mediate ER retention element. A helical transmembrane segment spans residues 31-51 (YVLLVWLGIFVGSWMVYVHYS). Residues 52–431 (SYSELCRGHV…WREISNTNYS (380 aa)) lie on the Lumenal side of the membrane. 2 disulfide bridges follow: cysteine 57–cysteine 94 and cysteine 62–cysteine 117.

It belongs to the DIPK family. Among the many cysteines in the lumenal domain, most are probably involved in disulfide bonds. As to expression, expressed in kidney, testis, lung, heart, stomach, intestine, pancreas, liver and salivary gland. Strongly expressed in acute pancreatitis, brain, and in peripheral endothelial cells.

The protein resides in the endoplasmic reticulum membrane. This chain is Divergent protein kinase domain 1B (Dipk1b), found in Mus musculus (Mouse).